Here is an 877-residue protein sequence, read N- to C-terminus: Clumping factor B (877 aa).

The first 44 residues, 1-44 (MKKRIDYLSNKQNKYSIRRFTVGTTSVIVGATILFGIGNHQAQA), serve as a signal peptide directing secretion. The YSIRK-G/S signaling motif signature appears at 15–26 (YSIRRFTVGTTS). 2 stretches are compositionally biased toward polar residues: residues 44 to 61 (ASEQ…NASA) and 68 to 95 (MIET…NVDS). The segment at 44–192 (ASEQSNDTTQ…QGTSKPSVRT (149 aa)) is disordered. Residues 45 to 542 (SEQSNDTTQS…GSADGDSAVN (498 aa)) form a ligand binding A region region. Residues 96–119 (TTKPMSTQTSNTTTTEPASTNETP) show a composition bias toward low complexity. Positions 120–189 (QPTAIKNQAT…SNAQGTSKPS (70 aa)) are enriched in polar residues. The MIDAS-like motif signature appears at 272–276 (DYSNS). The tract at residues 530–849 (YGGGSADGDS…ETGDKSENTN (320 aa)) is disordered. The span at 545–555 (DPTPGPPVDPE) shows a compositional bias: pro residues. The segment covering 556–801 (PSPDPEPEPT…SDSDSDSDSD (246 aa)) has biased composition (acidic residues). Residues 805-816 (RVTPPNNEQKAP) show a composition bias toward polar residues. Residues 833-846 (HKTDALPETGDKSE) show a composition bias toward basic and acidic residues. The short motif at 838–842 (LPETG) is the LPXTG sorting signal element. Pentaglycyl murein peptidoglycan amidated threonine is present on Thr-841. Residues 842–877 (GDKSENTNATLFGAMMALLGSLLLFRKRKQDHKEKA) constitute a propeptide, removed by sortase.

Belongs to the serine-aspartate repeat-containing protein (SDr) family. Post-translationally, proteolytically cleaved by aureolysin (aur). This cleavage leads to the inactivation of ClfB.

The protein resides in the secreted. The protein localises to the cell wall. Functionally, cell surface-associated protein implicated in virulence by promoting bacterial attachment to both alpha- and beta-chains of human fibrinogen and inducing the formation of bacterial clumps. This chain is Clumping factor B (clfB), found in Staphylococcus aureus (strain Mu50 / ATCC 700699).